Here is a 209-residue protein sequence, read N- to C-terminus: Lysine-rich arabinogalactan protein 18 (209 aa).

The signal sequence occupies residues 1–21 (MDRNFLLTVTLICIVVAGVGG). The segment at 21–185 (GQSPISSPTK…PSADDQSGAA (165 aa)) is disordered. Residues 23 to 79 (SPISSPTKSPTTPSAPTTSPTKSPAVTSPTTAPAKTPTASASSPVESPKSPAPVSES) are compositionally biased toward low complexity. Pro residues-rich tracts occupy residues 80–95 (SPPPTPVPESSPPVPA) and 103–119 (SSPPVPAPVADSPPAPV). Residues 132–145 (SKHKKTTKKSKKHQ) show a composition bias toward basic residues. Pro residues predominate over residues 149–164 (APAPELLGPPAPPTES). Glycine 183 carries GPI-anchor amidated glycine lipidation. A propeptide spans 184-209 (AASTRVLRNVAVGAVATAWAVLVMAF) (removed in mature form).

Belongs to the lysine-rich AGP family. In terms of processing, O-glycosylated on the hydroxyproline residues. As to expression, predominantly expressed in flowers, and moderately expressed in roots, stems and young leaves.

The protein localises to the cell membrane. Its function is as follows. Proteoglycan that seems to be implicated in diverse developmental roles such as differentiation, cell-cell recognition, embryogenesis and programmed cell death. The sequence is that of Lysine-rich arabinogalactan protein 18 (AGP18) from Arabidopsis thaliana (Mouse-ear cress).